A 120-amino-acid chain; its full sequence is Ribosome-binding factor A (120 aa).

The protein belongs to the RbfA family. As to quaternary structure, monomer. Binds 30S ribosomal subunits, but not 50S ribosomal subunits or 70S ribosomes.

It is found in the cytoplasm. One of several proteins that assist in the late maturation steps of the functional core of the 30S ribosomal subunit. Associates with free 30S ribosomal subunits (but not with 30S subunits that are part of 70S ribosomes or polysomes). Required for efficient processing of 16S rRNA. May interact with the 5'-terminal helix region of 16S rRNA. This is Ribosome-binding factor A from Rickettsia felis (strain ATCC VR-1525 / URRWXCal2) (Rickettsia azadi).